A 494-amino-acid chain; its full sequence is Cytochrome P450 71D94 (494 aa).

Residues 1–21 (MELNLLLVIIILVATYTVSLL) form a helical; Signal-anchor for type II membrane protein membrane-spanning segment. A heme-binding site is contributed by Cys-434.

It belongs to the cytochrome P450 family. It depends on heme as a cofactor.

It localises to the endoplasmic reticulum membrane. Functionally, cytochrome P450 oxygenase of undefined substrate. Not active with limonene, (+)- or (-)-piperitone, (-)-isopiperitone, piperitenone or (+)-pulegone. This chain is Cytochrome P450 71D94 (CYP71D94), found in Mentha gracilis (Gingermint).